A 649-amino-acid polypeptide reads, in one-letter code: Arylsulfatase (649 aa).

Residues 1 to 22 (MLQRLVVALCLLGFAALTAAAA) form the signal peptide. Residues D34 and D35 each contribute to the Ca(2+) site. A glycan (N-linked (GlcNAc...) asparagine) is linked at N41. C72 contributes to the Ca(2+) binding site. The active-site Nucleophile is C72. Position 72 is a 3-oxoalanine (Cys) (C72). N89, N224, and N279 each carry an N-linked (GlcNAc...) asparagine glycan. Ca(2+) is bound by residues D324 and N325. N-linked (GlcNAc...) asparagine glycans are attached at residues N445, N489, and N531.

It belongs to the sulfatase family. Ca(2+) serves as cofactor. In terms of processing, the conversion to 3-oxoalanine (also known as C-formylglycine, FGly), of a serine or cysteine residue in prokaryotes and of a cysteine residue in eukaryotes, is critical for catalytic activity.

It is found in the periplasm. It carries out the reaction an aryl sulfate + H2O = a phenol + sulfate + H(+). With respect to regulation, inhibited by Na(3)BO(3) and KCN. No inhibition by sodium dodecyl sulfate, even at high concentration. Functionally, is commonly produced by soil microorganisms and plays an important role in the mineralization of sulfates. This Volvox carteri (Green alga) protein is Arylsulfatase.